We begin with the raw amino-acid sequence, 420 residues long: Serine--tRNA ligase (420 aa).

225–227 (TLE) is a binding site for L-serine. Position 256–258 (256–258 (RQE)) interacts with ATP. Glu279 provides a ligand contact to L-serine. 343 to 346 (EVSS) provides a ligand contact to ATP. Residue Thr379 coordinates L-serine.

The protein belongs to the class-II aminoacyl-tRNA synthetase family. Type-1 seryl-tRNA synthetase subfamily. Homodimer. The tRNA molecule binds across the dimer.

The protein localises to the cytoplasm. The enzyme catalyses tRNA(Ser) + L-serine + ATP = L-seryl-tRNA(Ser) + AMP + diphosphate + H(+). It carries out the reaction tRNA(Sec) + L-serine + ATP = L-seryl-tRNA(Sec) + AMP + diphosphate + H(+). The protein operates within aminoacyl-tRNA biosynthesis; selenocysteinyl-tRNA(Sec) biosynthesis; L-seryl-tRNA(Sec) from L-serine and tRNA(Sec): step 1/1. Its function is as follows. Catalyzes the attachment of serine to tRNA(Ser). Is also able to aminoacylate tRNA(Sec) with serine, to form the misacylated tRNA L-seryl-tRNA(Sec), which will be further converted into selenocysteinyl-tRNA(Sec). This is Serine--tRNA ligase from Mycoplasma pneumoniae (strain ATCC 29342 / M129 / Subtype 1) (Mycoplasmoides pneumoniae).